Reading from the N-terminus, the 834-residue chain is Probable basic-leucine zipper transcription factor D (834 aa).

The interval 83 to 160 (NNNNMLNDHS…SNNNSSSEGE (78 aa)) is disordered. A compositionally biased stretch (polar residues) spans 90–111 (DHSSSPMRVPNSSPSLYNNSIE). Over residues 119–157 (DNSNNNNNNNNNINVNDINVNDINSNSTNNNESNNNSSS) the composition is skewed to low complexity. Residues 211–246 (SEQQQQQQQQQQQQQQQQQQQQQQQQQHQHLLQEHQ) are a coiled coil. Residues 378-405 (VVDPPTHNQEDERNVKKQRRLIKNRESA) are disordered. One can recognise a bZIP domain in the interval 391–454 (NVKKQRRLIK…KQLAAQNSNS (64 aa)). A basic motif region spans residues 393-402 (KKQRRLIKNR). A leucine-zipper region spans residues 407-414 (LSRMRKKI). Disordered stretches follow at residues 455–504 (NNNS…QQQS) and 550–712 (LSMS…KTPQ). The segment covering 550-595 (LSMSDSESSPQKSLRLSSNHHSLPDGTFNTIPIDQQTTATTNTKSL) has biased composition (polar residues). 2 stretches are compositionally biased toward low complexity: residues 616–651 (NNNN…NNNN) and 694–707 (TTTT…TTST).

Belongs to the bZIP family.

The protein localises to the nucleus. Its function is as follows. Probable transcriptional regulator. The sequence is that of Probable basic-leucine zipper transcription factor D (bzpD) from Dictyostelium discoideum (Social amoeba).